The primary structure comprises 235 residues: Urease accessory protein UreF (235 aa).

The protein belongs to the UreF family. As to quaternary structure, ureD, UreF and UreG form a complex that acts as a GTP-hydrolysis-dependent molecular chaperone, activating the urease apoprotein by helping to assemble the nickel containing metallocenter of UreC. The UreE protein probably delivers the nickel.

The protein resides in the cytoplasm. In terms of biological role, required for maturation of urease via the functional incorporation of the urease nickel metallocenter. The polypeptide is Urease accessory protein UreF (Haemophilus influenzae (strain 86-028NP)).